The primary structure comprises 528 residues: Glucose-6-phosphate isomerase (528 aa).

Glu-322 serves as the catalytic Proton donor. Residues His-351 and Lys-455 contribute to the active site.

This sequence belongs to the GPI family.

The protein resides in the cytoplasm. It carries out the reaction alpha-D-glucose 6-phosphate = beta-D-fructose 6-phosphate. Its pathway is carbohydrate biosynthesis; gluconeogenesis. The protein operates within carbohydrate degradation; glycolysis; D-glyceraldehyde 3-phosphate and glycerone phosphate from D-glucose: step 2/4. In terms of biological role, catalyzes the reversible isomerization of glucose-6-phosphate to fructose-6-phosphate. In Trichormus variabilis (strain ATCC 29413 / PCC 7937) (Anabaena variabilis), this protein is Glucose-6-phosphate isomerase.